The sequence spans 94 residues: Large ribosomal subunit protein eL43B (94 aa).

Residues 39 to 62 form a C4-type zinc finger; sequence CPFCGRLTVKRTAAGIWKCSGKGC.

Belongs to the eukaryotic ribosomal protein eL43 family. As to quaternary structure, component of the large ribosomal subunit (LSU). Mature yeast ribosomes consist of a small (40S) and a large (60S) subunit. The 40S small subunit contains 1 molecule of ribosomal RNA (18S rRNA) and at least 33 different proteins. The large 60S subunit contains 3 rRNA molecules (25S, 5.8S and 5S rRNA) and at least 46 different proteins.

It localises to the cytoplasm. Functionally, component of the ribosome, a large ribonucleoprotein complex responsible for the synthesis of proteins in the cell. The small ribosomal subunit (SSU) binds messenger RNAs (mRNAs) and translates the encoded message by selecting cognate aminoacyl-transfer RNA (tRNA) molecules. The large subunit (LSU) contains the ribosomal catalytic site termed the peptidyl transferase center (PTC), which catalyzes the formation of peptide bonds, thereby polymerizing the amino acids delivered by tRNAs into a polypeptide chain. The nascent polypeptides leave the ribosome through a tunnel in the LSU and interact with protein factors that function in enzymatic processing, targeting, and the membrane insertion of nascent chains at the exit of the ribosomal tunnel. This is Large ribosomal subunit protein eL43B (rpl4302) from Schizosaccharomyces pombe (strain 972 / ATCC 24843) (Fission yeast).